A 350-amino-acid chain; its full sequence is Twinfilin-1 (350 aa).

N-acetylserine is present on Ser-2. An ADF-H 1 domain is found at 2–139; sequence SHQTGIQASE…SLHGYRKYLL (138 aa). Phosphoserine is present on residues Ser-143 and Ser-277. Positions 175–313 constitute an ADF-H 2 domain; that stretch reads LQGVAFPISR…TADFLYDEVH (139 aa). A Phosphotyrosine modification is found at Tyr-309. Positions 316-350 are disordered; that stretch reads QHAHKQSFAKPKGPAGKRGIRRLIRGPAEAEATTD. A Phosphothreonine modification is found at Thr-349.

This sequence belongs to the actin-binding proteins ADF family. Twinfilin subfamily. In terms of assembly, interacts with G-actin; ADP-actin form and capping protein (CP). May also be able to interact with TWF2 and phosphoinositides, PI(4,5)P2. When bound to PI(4,5)P2, it is down-regulated. Interacts with ACTG1. Post-translationally, phosphorylated on serine and threonine residues.

The protein resides in the cytoplasm. The protein localises to the cytoskeleton. Functionally, actin-binding protein involved in motile and morphological processes. Inhibits actin polymerization, likely by sequestering G-actin. By capping the barbed ends of filaments, it also regulates motility. Seems to play an important role in clathrin-mediated endocytosis and distribution of endocytic organelles. This is Twinfilin-1 (Twf1) from Rattus norvegicus (Rat).